Here is a 410-residue protein sequence, read N- to C-terminus: Putative transposase Rv3428c (410 aa).

Residues 40–220 (VPRGPVDAGS…QPLRMFEAVE (181 aa)) form the Integrase catalytic domain. Residues 390–410 (AANEPTTSSPASTAGGVPARP) are disordered.

The protein belongs to the transposase IS21/IS408/IS1162 family.

The sequence is that of Putative transposase Rv3428c from Mycobacterium tuberculosis (strain ATCC 25618 / H37Rv).